A 363-amino-acid chain; its full sequence is Putative glutamate--cysteine ligase 2-3 (363 aa).

The protein belongs to the glutamate--cysteine ligase type 2 family. YbdK subfamily.

It catalyses the reaction L-cysteine + L-glutamate + ATP = gamma-L-glutamyl-L-cysteine + ADP + phosphate + H(+). ATP-dependent carboxylate-amine ligase which exhibits weak glutamate--cysteine ligase activity. The chain is Putative glutamate--cysteine ligase 2-3 from Rubrobacter xylanophilus (strain DSM 9941 / JCM 11954 / NBRC 16129 / PRD-1).